The sequence spans 469 residues: Neuraminidase (469 aa).

Residues 1 to 9 (MNPNQKIIT) are Intravirion-facing. The helical transmembrane segment at 10–30 (IGSVSLTIATVCFLMQIAILV) threads the bilayer. Positions 11–33 (GSVSLTIATVCFLMQIAILVTTV) are involved in apical transport and lipid raft association. Residues 31-469 (TTVTLHFKQH…DGANINFMPI (439 aa)) are Virion surface-facing. A hypervariable stalk region region spans residues 36 to 88 (HFKQHECDSPASNQVMPCEPIIIERNITEIVYLNNTTIEKEICPKVVEYRNWS). N-linked (GlcNAc...) asparagine; by host glycans are attached at residues N61, N69, N70, and N86. The interval 91–469 (QCQITGFAPF…DGANINFMPI (379 aa)) is head of neuraminidase. 9 disulfides stabilise this stretch: C92–C417, C124–C129, C175–C193, C183–C230, C232–C237, C278–C291, C280–C289, C318–C337, and C421–C447. Substrate is bound at residue R118. N146 is a glycosylation site (N-linked (GlcNAc...) asparagine; by host). The active-site Proton donor/acceptor is D151. Residue R152 participates in substrate binding. N-linked (GlcNAc...) asparagine; by host glycosylation is found at N200 and N234. Position 276–277 (276–277 (EE)) interacts with substrate. R292 lines the substrate pocket. D293, G297, and D324 together coordinate Ca(2+). The disordered stretch occupies residues 324–349 (DTPRNDDRSSNSNCRNPNNERGTQGV). A compositionally biased stretch (low complexity) spans 333–342 (SNSNCRNPNN). The Ca(2+) site is built by G345, T346, and Q347. R371 is a binding site for substrate. Residue N402 is glycosylated (N-linked (GlcNAc...) asparagine; by host). The active-site Nucleophile is the Y406.

Belongs to the glycosyl hydrolase 34 family. As to quaternary structure, homotetramer. Ca(2+) serves as cofactor. In terms of processing, N-glycosylated.

It localises to the virion membrane. The protein resides in the host apical cell membrane. It carries out the reaction Hydrolysis of alpha-(2-&gt;3)-, alpha-(2-&gt;6)-, alpha-(2-&gt;8)- glycosidic linkages of terminal sialic acid residues in oligosaccharides, glycoproteins, glycolipids, colominic acid and synthetic substrates.. Inhibited by the neuraminidase inhibitors zanamivir (Relenza) and oseltamivir (Tamiflu). These drugs interfere with the release of progeny virus from infected cells and are effective against all influenza strains. Resistance to neuraminidase inhibitors is quite rare. Functionally, catalyzes the removal of terminal sialic acid residues from viral and cellular glycoconjugates. Cleaves off the terminal sialic acids on the glycosylated HA during virus budding to facilitate virus release. Additionally helps virus spread through the circulation by further removing sialic acids from the cell surface. These cleavages prevent self-aggregation and ensure the efficient spread of the progeny virus from cell to cell. Otherwise, infection would be limited to one round of replication. Described as a receptor-destroying enzyme because it cleaves a terminal sialic acid from the cellular receptors. May facilitate viral invasion of the upper airways by cleaving the sialic acid moieties on the mucin of the airway epithelial cells. Likely to plays a role in the budding process through its association with lipid rafts during intracellular transport. May additionally display a raft-association independent effect on budding. Plays a role in the determination of host range restriction on replication and virulence. Sialidase activity in late endosome/lysosome traffic seems to enhance virus replication. The protein is Neuraminidase of Aves (Human).